A 224-amino-acid chain; its full sequence is 7-cyano-7-deazaguanine synthase (224 aa).

10 to 20 contacts ATP; that stretch reads LSGGLDSATVV. Positions 189, 199, 202, and 205 each coordinate Zn(2+).

It belongs to the QueC family. Zn(2+) is required as a cofactor.

It catalyses the reaction 7-carboxy-7-deazaguanine + NH4(+) + ATP = 7-cyano-7-deazaguanine + ADP + phosphate + H2O + H(+). It functions in the pathway purine metabolism; 7-cyano-7-deazaguanine biosynthesis. Functionally, catalyzes the ATP-dependent conversion of 7-carboxy-7-deazaguanine (CDG) to 7-cyano-7-deazaguanine (preQ(0)). The chain is 7-cyano-7-deazaguanine synthase from Pseudomonas putida (strain W619).